The following is a 422-amino-acid chain: Dihydrofolate synthase/folylpolyglutamate synthase (422 aa).

29–31 is a 7,8-dihydropteroate binding site; it reads DLG. ATP is bound at residue 59–62; the sequence is GKGT. Mg(2+) is bound at residue S83. 122-125 serves as a coordination point for 7,8-dihydropteroate; that stretch reads TYFE. E146 is a Mg(2+) binding site. 153–155 contacts 7,8-dihydropteroate; the sequence is LDA. Residue H173 participates in Mg(2+) binding. The residue at position 188 (K188) is an N6-carboxylysine. Residues N257, R289, and D302 each contribute to the ATP site.

Belongs to the folylpolyglutamate synthase family. Monomer. It depends on Mg(2+) as a cofactor.

The catalysed reaction is 7,8-dihydropteroate + L-glutamate + ATP = 7,8-dihydrofolate + ADP + phosphate + H(+). The enzyme catalyses (6S)-5,6,7,8-tetrahydrofolyl-(gamma-L-Glu)(n) + L-glutamate + ATP = (6S)-5,6,7,8-tetrahydrofolyl-(gamma-L-Glu)(n+1) + ADP + phosphate + H(+). It catalyses the reaction 10-formyltetrahydrofolyl-(gamma-L-Glu)(n) + L-glutamate + ATP = 10-formyltetrahydrofolyl-(gamma-L-Glu)(n+1) + ADP + phosphate + H(+). It carries out the reaction (6R)-5,10-methylenetetrahydrofolyl-(gamma-L-Glu)(n) + L-glutamate + ATP = (6R)-5,10-methylenetetrahydrofolyl-(gamma-L-Glu)(n+1) + ADP + phosphate + H(+). It participates in cofactor biosynthesis; tetrahydrofolate biosynthesis; 7,8-dihydrofolate from 2-amino-4-hydroxy-6-hydroxymethyl-7,8-dihydropteridine diphosphate and 4-aminobenzoate: step 2/2. Its pathway is cofactor biosynthesis; tetrahydrofolylpolyglutamate biosynthesis. Its function is as follows. Functions in two distinct reactions of the de novo folate biosynthetic pathway. Catalyzes the addition of a glutamate residue to dihydropteroate (7,8-dihydropteroate or H2Pte) to form dihydrofolate (7,8-dihydrofolate monoglutamate or H2Pte-Glu). Also catalyzes successive additions of L-glutamate to tetrahydrofolate or 10-formyltetrahydrofolate or 5,10-methylenetetrahydrofolate, leading to folylpolyglutamate derivatives. The chain is Dihydrofolate synthase/folylpolyglutamate synthase from Escherichia coli (strain K12).